The following is a 262-amino-acid chain: 3-methyl-2-oxobutanoate hydroxymethyltransferase (262 aa).

2 residues coordinate Mg(2+): D43 and D82. 3-methyl-2-oxobutanoate is bound by residues 43–44 (DS), D82, and K111. E113 is a Mg(2+) binding site. Residue E180 is the Proton acceptor of the active site.

This sequence belongs to the PanB family. As to quaternary structure, homodecamer; pentamer of dimers. The cofactor is Mg(2+).

The protein resides in the cytoplasm. It carries out the reaction 3-methyl-2-oxobutanoate + (6R)-5,10-methylene-5,6,7,8-tetrahydrofolate + H2O = 2-dehydropantoate + (6S)-5,6,7,8-tetrahydrofolate. It participates in cofactor biosynthesis; (R)-pantothenate biosynthesis; (R)-pantoate from 3-methyl-2-oxobutanoate: step 1/2. Catalyzes the reversible reaction in which hydroxymethyl group from 5,10-methylenetetrahydrofolate is transferred onto alpha-ketoisovalerate to form ketopantoate. The polypeptide is 3-methyl-2-oxobutanoate hydroxymethyltransferase (Wolinella succinogenes (strain ATCC 29543 / DSM 1740 / CCUG 13145 / JCM 31913 / LMG 7466 / NCTC 11488 / FDC 602W) (Vibrio succinogenes)).